Consider the following 220-residue polypeptide: DNA mismatch repair protein MutH (220 aa).

Belongs to the MutH family.

The protein resides in the cytoplasm. Its function is as follows. Sequence-specific endonuclease that cleaves unmethylated GATC sequences. It is involved in DNA mismatch repair. This chain is DNA mismatch repair protein MutH, found in Buchnera aphidicola subsp. Baizongia pistaciae (strain Bp).